The sequence spans 498 residues: MSNLPWLTLIVLFPFSASFLIPLLPYKGNKVVRWYTLGICALEFLLITFTFCCQFHLSDPSIQLKEDYNWISFLYFHWNLGVDGLSMGLILLTGFITTLAILAAWPVTRNVRLFYFLMLAMYSGQIGLFASQNILLFFFMWELELIPVYLLLSMWGGKKRLYSSTKFLLYTAGGSIFLLVGSLTMGLYGSNGTSFDLQILTNRSYPIAVETALYFSFLIAYAVKLPILPFHTWLPDTHGEAHYSTCMLLAGILLKMGGYGLIRINMELLPHAHFLFSPLLVTMGAVQIAYASLISFSLPNIKRRIAYSSVSHMGFVIIGISSITDIGTNGAILQMISHGLIGAALFFLAGISYDRTQTLYLDQLGGIAVPMPRLFTMFSFFSLASLALPGMSSFVAEFLIFLGIVTNPYYSLIFKSIILFIGAIGVILTPIYLLSMLRKMFYGFKIYQNSLFFIDLGPREIFISVFILLPILGIGIYPNLVLSLWNEKVESILLQYYG.

Transmembrane regions (helical) follow at residues 4–24 (LPWL…IPLL), 37–57 (LGIC…QFHL), 87–107 (MGLI…AWPV), 111–131 (VRLF…LFAS), 134–154 (ILLF…LLSM), 167–187 (FLLY…TMGL), 207–227 (IAVE…KLPI), 242–262 (HYST…YGLI), 274–294 (FLFS…ASLI), 305–325 (IAYS…SITD), 331–351 (AILQ…LAGI), 386–406 (LALP…GIVT), 417–437 (IILF…LSML), and 461–481 (IFIS…PNLV).

It belongs to the complex I subunit 4 family.

The protein localises to the plastid. The protein resides in the chloroplast thylakoid membrane. The catalysed reaction is a plastoquinone + NADH + (n+1) H(+)(in) = a plastoquinol + NAD(+) + n H(+)(out). The enzyme catalyses a plastoquinone + NADPH + (n+1) H(+)(in) = a plastoquinol + NADP(+) + n H(+)(out). The protein is NAD(P)H-quinone oxidoreductase chain 4, chloroplastic of Psilotum nudum (Whisk fern).